Here is a 444-residue protein sequence, read N- to C-terminus: Tol-Pal system protein TolB (444 aa).

The first 19 residues, 1 to 19 (MRNIIYFILLLLFSFKGYA), serve as a signal peptide directing secretion.

Belongs to the TolB family. As to quaternary structure, the Tol-Pal system is composed of five core proteins: the inner membrane proteins TolA, TolQ and TolR, the periplasmic protein TolB and the outer membrane protein Pal. They form a network linking the inner and outer membranes and the peptidoglycan layer.

The protein resides in the periplasm. Functionally, part of the Tol-Pal system, which plays a role in outer membrane invagination during cell division and is important for maintaining outer membrane integrity. This is Tol-Pal system protein TolB from Rickettsia akari (strain Hartford).